The sequence spans 176 residues: Endoribonuclease YbeY (176 aa).

Positions 117, 121, and 127 each coordinate Zn(2+).

The protein belongs to the endoribonuclease YbeY family. The cofactor is Zn(2+).

The protein resides in the cytoplasm. Functionally, single strand-specific metallo-endoribonuclease involved in late-stage 70S ribosome quality control and in maturation of the 3' terminus of the 16S rRNA. The chain is Endoribonuclease YbeY from Methylocella silvestris (strain DSM 15510 / CIP 108128 / LMG 27833 / NCIMB 13906 / BL2).